The sequence spans 337 residues: Ketol-acid reductoisomerase (NADP(+)) (337 aa).

Residues 1–180 (MQVYYDKDAD…GGTKGGVIET (180 aa)) enclose the KARI N-terminal Rossmann domain. NADP(+) contacts are provided by residues 24–27 (YGSQ), Arg47, and Ser51. His106 is an active-site residue. Residue Gly132 coordinates NADP(+). A KARI C-terminal knotted domain is found at 181–326 (TFREETETDL…AQLRAMMPWI (146 aa)). Residues Asp189, Glu193, Glu225, and Glu229 each contribute to the Mg(2+) site. A substrate-binding site is contributed by Ser250.

The protein belongs to the ketol-acid reductoisomerase family. Mg(2+) serves as cofactor.

The enzyme catalyses (2R)-2,3-dihydroxy-3-methylbutanoate + NADP(+) = (2S)-2-acetolactate + NADPH + H(+). The catalysed reaction is (2R,3R)-2,3-dihydroxy-3-methylpentanoate + NADP(+) = (S)-2-ethyl-2-hydroxy-3-oxobutanoate + NADPH + H(+). It functions in the pathway amino-acid biosynthesis; L-isoleucine biosynthesis; L-isoleucine from 2-oxobutanoate: step 2/4. Its pathway is amino-acid biosynthesis; L-valine biosynthesis; L-valine from pyruvate: step 2/4. In terms of biological role, involved in the biosynthesis of branched-chain amino acids (BCAA). Catalyzes an alkyl-migration followed by a ketol-acid reduction of (S)-2-acetolactate (S2AL) to yield (R)-2,3-dihydroxy-isovalerate. In the isomerase reaction, S2AL is rearranged via a Mg-dependent methyl migration to produce 3-hydroxy-3-methyl-2-ketobutyrate (HMKB). In the reductase reaction, this 2-ketoacid undergoes a metal-dependent reduction by NADPH to yield (R)-2,3-dihydroxy-isovalerate. This is Ketol-acid reductoisomerase (NADP(+)) from Neisseria meningitidis serogroup A / serotype 4A (strain DSM 15465 / Z2491).